The following is a 137-amino-acid chain: Nucleoside diphosphate kinase (137 aa).

Lys9, Phe57, Arg85, Thr91, Arg102, and Asn112 together coordinate ATP. His115 functions as the Pros-phosphohistidine intermediate in the catalytic mechanism.

Belongs to the NDK family. As to quaternary structure, homotetramer. Mg(2+) serves as cofactor.

It localises to the cytoplasm. The enzyme catalyses a 2'-deoxyribonucleoside 5'-diphosphate + ATP = a 2'-deoxyribonucleoside 5'-triphosphate + ADP. It catalyses the reaction a ribonucleoside 5'-diphosphate + ATP = a ribonucleoside 5'-triphosphate + ADP. In terms of biological role, major role in the synthesis of nucleoside triphosphates other than ATP. The ATP gamma phosphate is transferred to the NDP beta phosphate via a ping-pong mechanism, using a phosphorylated active-site intermediate. The protein is Nucleoside diphosphate kinase of Helicobacter hepaticus (strain ATCC 51449 / 3B1).